Here is a 340-residue protein sequence, read N- to C-terminus: Methionine import ATP-binding protein MetN 2 (340 aa).

One can recognise an ABC transporter domain in the interval isoleucine 2–valine 241. Glycine 38–serine 45 lines the ATP pocket.

The protein belongs to the ABC transporter superfamily. Methionine importer (TC 3.A.1.24) family. In terms of assembly, the complex is composed of two ATP-binding proteins (MetN), two transmembrane proteins (MetI) and a solute-binding protein (MetQ).

It localises to the cell membrane. The enzyme catalyses L-methionine(out) + ATP + H2O = L-methionine(in) + ADP + phosphate + H(+). It carries out the reaction D-methionine(out) + ATP + H2O = D-methionine(in) + ADP + phosphate + H(+). Functionally, part of the ABC transporter complex MetNIQ involved in methionine import. Responsible for energy coupling to the transport system. The polypeptide is Methionine import ATP-binding protein MetN 2 (Listeria innocua serovar 6a (strain ATCC BAA-680 / CLIP 11262)).